The following is a 405-amino-acid chain: L-rhamnonate dehydratase (405 aa).

Residues His-33 and Arg-59 each contribute to the substrate site. Asp-226, Glu-252, and Glu-280 together coordinate Mg(2+). The Proton acceptor role is filled by His-329. Glu-349 provides a ligand contact to substrate.

This sequence belongs to the mandelate racemase/muconate lactonizing enzyme family. RhamD subfamily. In terms of assembly, homooctamer; tetramer of dimers. The cofactor is Mg(2+).

It carries out the reaction L-rhamnonate = 2-dehydro-3-deoxy-L-rhamnonate + H2O. Functionally, catalyzes the dehydration of L-rhamnonate to 2-keto-3-deoxy-L-rhamnonate (KDR). The polypeptide is L-rhamnonate dehydratase (Salmonella typhi).